The chain runs to 395 residues: Acetate kinase 1 (395 aa).

Asparagine 8 serves as a coordination point for Mg(2+). An ATP-binding site is contributed by lysine 15. Residue arginine 89 participates in substrate binding. Catalysis depends on aspartate 146, which acts as the Proton donor/acceptor. Residues 206–210 (HIGNG), 283–285 (DMR), and 330–334 (GIGEN) each bind ATP. Glutamate 382 contacts Mg(2+).

It belongs to the acetokinase family. As to quaternary structure, homodimer. It depends on Mg(2+) as a cofactor. The cofactor is Mn(2+).

It is found in the cytoplasm. The enzyme catalyses acetate + ATP = acetyl phosphate + ADP. It functions in the pathway metabolic intermediate biosynthesis; acetyl-CoA biosynthesis; acetyl-CoA from acetate: step 1/2. In terms of biological role, catalyzes the formation of acetyl phosphate from acetate and ATP. Can also catalyze the reverse reaction. The protein is Acetate kinase 1 of Lactococcus lactis subsp. lactis (strain IL1403) (Streptococcus lactis).